Consider the following 602-residue polypeptide: Laccase 1 (602 aa).

The signal sequence occupies residues 1–20 (MDHFARVSLVAALLYTNTWA). Plastocyanin-like domains are found at residues 30-128 (TWEE…VRPK) and 157-345 (YLVV…RIPN). Histidine 78, histidine 80, histidine 108, and histidine 110 together coordinate Cu cation. Residues asparagine 176, asparagine 241, asparagine 264, asparagine 388, asparagine 430, asparagine 454, and asparagine 470 are each glycosylated (N-linked (GlcNAc...) asparagine). The region spanning 461-584 (NEGLLLRTRN…GGMGMVIMDG (124 aa)) is the Plastocyanin-like 3 domain. Cu cation is bound by residues histidine 492, histidine 495, and histidine 497. A glycan (N-linked (GlcNAc...) asparagine) is linked at asparagine 512. Positions 566, 567, 568, and 572 each coordinate Cu cation.

This sequence belongs to the multicopper oxidase family. Cu cation is required as a cofactor.

The protein localises to the cell surface. Its pathway is pigment biosynthesis. In terms of biological role, laccase; part of the Pks1 gene cluster that mediates the biosynthesis of an anthraquinone derivative pigment that contributes to conidial pigmentation that provides protection from UV radiation, heat and cold stress. The polyketide synthase Pks1 produces 1-acetyl-2,4,6,8-tetrahydroxy-9,10-anthraquinone though condensation of acetyl-CoA with malonyl-CoA. The dehydratase EthD and the laccase Mlac1 further convert the anthraquinone derivative into the final conidial pigment. This Metarhizium album (strain ARSEF 1941) protein is Laccase 1.